Consider the following 429-residue polypeptide: Enolase (429 aa).

Residue Gln163 coordinates (2R)-2-phosphoglycerate. The active-site Proton donor is the Glu205. Mg(2+) is bound by residues Asp242, Glu286, and Asp313. Lys338, Arg367, Ser368, and Lys389 together coordinate (2R)-2-phosphoglycerate. The active-site Proton acceptor is Lys338.

This sequence belongs to the enolase family. Requires Mg(2+) as cofactor.

The protein resides in the cytoplasm. The protein localises to the secreted. Its subcellular location is the cell surface. It carries out the reaction (2R)-2-phosphoglycerate = phosphoenolpyruvate + H2O. Its pathway is carbohydrate degradation; glycolysis; pyruvate from D-glyceraldehyde 3-phosphate: step 4/5. Catalyzes the reversible conversion of 2-phosphoglycerate (2-PG) into phosphoenolpyruvate (PEP). It is essential for the degradation of carbohydrates via glycolysis. In Citrifermentans bemidjiense (strain ATCC BAA-1014 / DSM 16622 / JCM 12645 / Bem) (Geobacter bemidjiensis), this protein is Enolase.